The sequence spans 122 residues: Small ribosomal subunit protein uS13 (122 aa).

A disordered region spans residues 95–122 (NLPVRGQRTHTNARTRKGKAKPIAGKKK).

Belongs to the universal ribosomal protein uS13 family. As to quaternary structure, part of the 30S ribosomal subunit. Forms a loose heterodimer with protein S19. Forms two bridges to the 50S subunit in the 70S ribosome.

Its function is as follows. Located at the top of the head of the 30S subunit, it contacts several helices of the 16S rRNA. In the 70S ribosome it contacts the 23S rRNA (bridge B1a) and protein L5 of the 50S subunit (bridge B1b), connecting the 2 subunits; these bridges are implicated in subunit movement. Contacts the tRNAs in the A and P-sites. In Methylobacterium nodulans (strain LMG 21967 / CNCM I-2342 / ORS 2060), this protein is Small ribosomal subunit protein uS13.